Reading from the N-terminus, the 282-residue chain is 4-hydroxy-3-methylbut-2-enyl diphosphate reductase (282 aa).

Cys-14 contributes to the [4Fe-4S] cluster binding site. 2 residues coordinate (2E)-4-hydroxy-3-methylbut-2-enyl diphosphate: His-43 and His-78. Dimethylallyl diphosphate-binding residues include His-43 and His-78. Residues His-43 and His-78 each contribute to the isopentenyl diphosphate site. Cys-100 is a binding site for [4Fe-4S] cluster. Position 128 (His-128) interacts with (2E)-4-hydroxy-3-methylbut-2-enyl diphosphate. His-128 contacts dimethylallyl diphosphate. His-128 contacts isopentenyl diphosphate. The active-site Proton donor is Glu-130. Residue Thr-164 coordinates (2E)-4-hydroxy-3-methylbut-2-enyl diphosphate. Cys-192 is a [4Fe-4S] cluster binding site. The (2E)-4-hydroxy-3-methylbut-2-enyl diphosphate site is built by Ser-220, Ser-221, Asn-222, and Ser-266. Residues Ser-220, Ser-221, Asn-222, and Ser-266 each contribute to the dimethylallyl diphosphate site. Isopentenyl diphosphate-binding residues include Ser-220, Ser-221, Asn-222, and Ser-266.

The protein belongs to the IspH family. [4Fe-4S] cluster is required as a cofactor.

It catalyses the reaction isopentenyl diphosphate + 2 oxidized [2Fe-2S]-[ferredoxin] + H2O = (2E)-4-hydroxy-3-methylbut-2-enyl diphosphate + 2 reduced [2Fe-2S]-[ferredoxin] + 2 H(+). It carries out the reaction dimethylallyl diphosphate + 2 oxidized [2Fe-2S]-[ferredoxin] + H2O = (2E)-4-hydroxy-3-methylbut-2-enyl diphosphate + 2 reduced [2Fe-2S]-[ferredoxin] + 2 H(+). It functions in the pathway isoprenoid biosynthesis; dimethylallyl diphosphate biosynthesis; dimethylallyl diphosphate from (2E)-4-hydroxy-3-methylbutenyl diphosphate: step 1/1. It participates in isoprenoid biosynthesis; isopentenyl diphosphate biosynthesis via DXP pathway; isopentenyl diphosphate from 1-deoxy-D-xylulose 5-phosphate: step 6/6. Its function is as follows. Catalyzes the conversion of 1-hydroxy-2-methyl-2-(E)-butenyl 4-diphosphate (HMBPP) into a mixture of isopentenyl diphosphate (IPP) and dimethylallyl diphosphate (DMAPP). Acts in the terminal step of the DOXP/MEP pathway for isoprenoid precursor biosynthesis. This Clostridium perfringens (strain SM101 / Type A) protein is 4-hydroxy-3-methylbut-2-enyl diphosphate reductase.